The sequence spans 119 residues: Protein MGF 110-11L (119 aa).

A signal peptide spans 1-17 (MKVLLGLLLGYSVLILA).

This sequence belongs to the asfivirus MGF 110 family.

The polypeptide is Protein MGF 110-11L (Ornithodoros (relapsing fever ticks)).